We begin with the raw amino-acid sequence, 721 residues long: Pre-mRNA-splicing ATP-dependent RNA helicase PRP28 (721 aa).

Residues 12–134 (KKAADTAAAK…SAEDIEATLL (123 aa)) form a disordered region. The segment covering 26–63 (PKAERERLAAEKAKKEEDDKKRKASEEEQKRKEEEQKW) has biased composition (basic and acidic residues). The segment covering 64 to 77 (RSNGSSRPNESNGS) has biased composition (polar residues). Positions 88-104 (NDGRDDRERDRDRDQGR) are enriched in basic and acidic residues. The Q motif motif lies at 288–316 (RSWQESNLPQRLLNIVDDVGYKDPSPIQR). Positions 319 to 522 (IPIALQARDL…KKYLRRPAIV (204 aa)) constitute a Helicase ATP-binding domain. Position 332–339 (332–339 (AVTGSGKT)) interacts with ATP. The DEAD box signature appears at 445 to 448 (DEAD). A Helicase C-terminal domain is found at 533–696 (TVEQRVEFVS…KVPEELRRHE (164 aa)). Residues 685–721 (ISKVPEELRRHEAAQSKPVRGAKKDKDEGSGKGNWQH) form a disordered region. A compositionally biased stretch (basic and acidic residues) spans 688-698 (VPEELRRHEAA).

The protein belongs to the DEAD box helicase family. DDX23/PRP28 subfamily. Component of the U5 snRNP complex.

The protein resides in the cytoplasm. Its subcellular location is the nucleus. The catalysed reaction is ATP + H2O = ADP + phosphate + H(+). Functionally, ATP-dependent RNA helicase involved in mRNA splicing. May destabilize the U1/5'-splice site duplex to permit an effective competition for the 5'-splice site by the U6 snRNA, resulting in the switch between U1 and U6 at the 5'-splice site. May also act to unwind the U4/U6 base-pairing interaction in the U4/U6/U5 snRNP, facilitating the first covalent step of splicing. The polypeptide is Pre-mRNA-splicing ATP-dependent RNA helicase PRP28 (PRP28) (Gibberella zeae (strain ATCC MYA-4620 / CBS 123657 / FGSC 9075 / NRRL 31084 / PH-1) (Wheat head blight fungus)).